Here is a 194-residue protein sequence, read N- to C-terminus: MHLAVFGGTFDPPHNGHLAMALFARELLPADRILISVSDNPLKPACGASDRQRLDMAELLSLEINRTGMNAEVTGWELQQPRPSYTVDLLRFVRSSHPDANLTLIVGEDSYQDFPRWRDPEGIFALADVAVFRRRGEDESDEIAGDSRVRCIAFDAPVSSTMVREFSATGKSLRGLVPETVMQYILSEGLYREA.

This sequence belongs to the NadD family.

The enzyme catalyses nicotinate beta-D-ribonucleotide + ATP + H(+) = deamido-NAD(+) + diphosphate. It functions in the pathway cofactor biosynthesis; NAD(+) biosynthesis; deamido-NAD(+) from nicotinate D-ribonucleotide: step 1/1. In terms of biological role, catalyzes the reversible adenylation of nicotinate mononucleotide (NaMN) to nicotinic acid adenine dinucleotide (NaAD). The chain is Probable nicotinate-nucleotide adenylyltransferase from Chlorobium luteolum (strain DSM 273 / BCRC 81028 / 2530) (Pelodictyon luteolum).